The chain runs to 651 residues: Chaperone protein dnaK1 (651 aa).

A Phosphothreonine; by autocatalysis modification is found at threonine 197.

It belongs to the heat shock protein 70 family.

In terms of biological role, acts as a chaperone. The sequence is that of Chaperone protein dnaK1 (dnaK1) from Thermosynechococcus vestitus (strain NIES-2133 / IAM M-273 / BP-1).